Consider the following 872-residue polypeptide: FHIP family protein CBG19667 (872 aa).

Residues 800-841 (SRSSPRSADEHDSTLFYGRSTIPPPGRKPLLREPSHQETLDD) are disordered. The segment covering 829–841 (LLREPSHQETLDD) has biased composition (basic and acidic residues).

It belongs to the FHIP family.

In Caenorhabditis briggsae, this protein is FHIP family protein CBG19667.